Here is an 887-residue protein sequence, read N- to C-terminus: Kinesin-like protein KIF20A (887 aa).

S2 bears the N-acetylserine mark. Phosphoserine occurs at positions 7, 14, and 21. Residues 63–506 form the Kinesin motor domain; it reads KVKVYLRIRP…AKFSALASQL (444 aa). An ATP-binding site is contributed by 159–166; the sequence is GVTNSGKT. S527 is subject to Phosphoserine; by PLK1. Residues 527–553 form a disordered region; it reads SPQVGPGLEKEDKADSDLEDSPEDEAD. Residues 543-553 are compositionally biased toward acidic residues; sequence DLEDSPEDEAD. Residues 559–804 are a coiled coil; it reads KEELLQVVEA…VLVKLDLQKK (246 aa). S683 and S823 each carry phosphoserine. The segment at 805-887 is globular; that stretch reads AACIAEQYHT…LLKSPFGKKY (83 aa). The interval 826-875 is disordered; it reads KRLGANQENQQPNHQPPGKKPFLRNLLPRTPTCQSSTDSSPYARILRSRH. T855 bears the Phosphothreonine mark. Polar residues predominate over residues 856–865; the sequence is PTCQSSTDSS. A phosphoserine mark is found at S865, S876, and S881.

It belongs to the TRAFAC class myosin-kinesin ATPase superfamily. Kinesin family. Post-translationally, phosphorylated by PLK1 at Ser-527 during mitosis, creating a docking site for PLK1 and recruiting PLK1 at central spindle. Ubiquitously expressed, with highest levels in spleen and testis.

It is found in the golgi apparatus. The protein localises to the cytoplasm. It localises to the cytoskeleton. Its subcellular location is the spindle. Functionally, mitotic kinesin required for chromosome passenger complex (CPC)-mediated cytokinesis. Following phosphorylation by PLK1, involved in recruitment of PLK1 to the central spindle. Interacts with guanosine triphosphate (GTP)-bound forms of RAB6A and RAB6B. May act as a motor required for the retrograde RAB6 regulated transport of Golgi membranes and associated vesicles along microtubules. Has a microtubule plus end-directed motility. This is Kinesin-like protein KIF20A (Kif20a) from Mus musculus (Mouse).